We begin with the raw amino-acid sequence, 462 residues long: Tissue alpha-L-fucosidase (462 aa).

Positions 1–28 (MWDLKSEWWAVGFGLLLLLAASAQAGGL) are cleaved as a signal peptide. 3 N-linked (GlcNAc...) asparagine glycosylation sites follow: Asn-237, Asn-264, and Asn-378.

It belongs to the glycosyl hydrolase 29 family. Homotetramer.

It is found in the lysosome. The catalysed reaction is an alpha-L-fucoside + H2O = L-fucose + an alcohol. The enzyme catalyses a neolactoside IV(2)-alpha-Fuc-nLc4Cer(d18:1(4E)) + H2O = a neolactoside nLc4Cer(d18:1(4E)) + L-fucose. It catalyses the reaction a neolactoside IV(2)-alpha-Fuc-nLc4Cer(d18:0) + H2O = a neolactoside nLc4Cer(d18:0) + L-fucose. Functionally, alpha-L-fucosidase is responsible for hydrolyzing the alpha-1,6-linked fucose joined to the reducing-end N-acetylglucosamine of the carbohydrate moieties of glycoproteins. This is Tissue alpha-L-fucosidase (Fuca1) from Rattus norvegicus (Rat).